Reading from the N-terminus, the 194-residue chain is Inner membrane-spanning protein YciB (194 aa).

5 consecutive transmembrane segments (helical) span residues 3–23, 47–67, 76–96, 119–139, and 149–169; these read LFIE…AGIY, IPAK…LTIY, WKVT…NTFF, LNLA…YIAF, and FKVF…ILFL.

It belongs to the YciB family.

Its subcellular location is the cell inner membrane. Plays a role in cell envelope biogenesis, maintenance of cell envelope integrity and membrane homeostasis. The sequence is that of Inner membrane-spanning protein YciB from Colwellia psychrerythraea (strain 34H / ATCC BAA-681) (Vibrio psychroerythus).